The sequence spans 156 residues: SsrA-binding protein (156 aa).

A compositionally biased stretch (basic and acidic residues) spans 135–150; the sequence is KRDTIKDREWQRDRSR. Residues 135 to 156 form a disordered region; that stretch reads KRDTIKDREWQRDRSRIMKKNT.

The protein belongs to the SmpB family.

It is found in the cytoplasm. Required for rescue of stalled ribosomes mediated by trans-translation. Binds to transfer-messenger RNA (tmRNA), required for stable association of tmRNA with ribosomes. tmRNA and SmpB together mimic tRNA shape, replacing the anticodon stem-loop with SmpB. tmRNA is encoded by the ssrA gene; the 2 termini fold to resemble tRNA(Ala) and it encodes a 'tag peptide', a short internal open reading frame. During trans-translation Ala-aminoacylated tmRNA acts like a tRNA, entering the A-site of stalled ribosomes, displacing the stalled mRNA. The ribosome then switches to translate the ORF on the tmRNA; the nascent peptide is terminated with the 'tag peptide' encoded by the tmRNA and targeted for degradation. The ribosome is freed to recommence translation, which seems to be the essential function of trans-translation. The sequence is that of SsrA-binding protein from Legionella pneumophila (strain Corby).